Here is an 806-residue protein sequence, read N- to C-terminus: MMEGLKKRTRKAFGIRKKEKDTDSTGSPDRDGMQPSPHEPPYHSKAECAREGGKKASKKSNGAPNGFYAEIDWERYNSPELDEEGYSIRPEEPGSTKGKHFYSSSESEEEEESHKKFNIKIKPLQSKDVLKNAATVDELKASIGNIALSPSPVRKSPRRSPGAIKRNLSSEEVARPRRSTPTPELTSKKPLDDTLALAPLFGPPLESAFDEQKTEVLLDQPEIWGSGQPMNPSTESPELARPFPTGTPPPLPPKTVPATPPRTGSPLTVATGNDQAATEAKIEKLPSISDLDSIFGPVLSPKSVAVNTEEKWVHFSDASPEHVTPELTPREQVVTPPAASDIPADSPAPAPPGPTGSAGPPGPPGPRHVPSPLNLEEVQKKVAEQTFIKDDYLETLSSPKECGLGQRATPPPPPPPTYRTVVSSPGPGSGSGTGTTSGASSPARPATPLVPCSTTPPPPPPRPPSRPKLPPGKPGVGDVSRPFSPPIHSSSPPPIAPLARAESTSSISSTNSLSAATTPTVGSSRGPSPLTMGAQDTLPVAAAFTETVNAYFKGADPSKCIVKITGEMVLSFPAGITRHFANNPSPAALTFRVVNSSRLEHVLPNPQLLCCDNTQNDANTKEFWVNMPNLMTHLKKVSEQKPQATYYNVDMLKYQVSAQGIQSTPLNLAVNWRCEPASTDLRIDYKYNTDAMSTAVALNNVQFLVPIDGGVTKLQAVLPPAVWNAEQQRILWKIPDISQKSENGGVGSLLARFQLSEGPSKPSPLVVQFTSEGSTLSGCDIELVGAGYRFSLIKKRFAAGKYLADN.

Disordered regions lie at residues 1-115 (MMEG…ESHK) and 142-278 (SIGN…QAAT). 2 stretches are compositionally biased toward basic and acidic residues: residues 16–32 (RKKEKDTDSTGSPDRDG) and 40–54 (PPYHSKAECAREGGK). Phosphoserine occurs at positions 78, 104, 105, 107, 149, 151, 156, and 169. A phosphothreonine mark is found at Thr180 and Thr182. Residues Ser236 and Phe243 each carry the phosphoserine modification. Over residues 245–260 (TGTPPPLPPKTVPATP) the composition is skewed to pro residues. 2 positions are modified to phosphothreonine: Thr247 and Thr259. 7 positions are modified to phosphoserine: Ser265, Asp274, Ser287, Ser289, Ser300, Ser316, and Ser319. The segment covering 265 to 276 (SPLTVATGNDQA) has biased composition (polar residues). Positions 315–324 (FSDASPEHVT) are enriched in basic and acidic residues. The disordered stretch occupies residues 315-533 (FSDASPEHVT…SRGPSPLTMG (219 aa)). A phosphothreonine mark is found at Thr324, Thr328, and Thr335. The segment covering 335-345 (TPPAASDIPAD) has biased composition (low complexity). Residue Ala338 is modified to Phosphoserine. The segment covering 346–369 (SPAPAPPGPTGSAGPPGPPGPRHV) has biased composition (pro residues). Residue Ser371 is modified to Phosphoserine. A compositionally biased stretch (basic and acidic residues) spans 377–392 (EVQKKVAEQTFIKDDY). Ser398 is subject to Phosphoserine. Thr409 carries the phosphothreonine modification. Residues 436 to 453 (TSGASSPARPATPLVPCS) are compositionally biased toward low complexity. Positions 454–473 (TTPPPPPPRPPSRPKLPPGK) are enriched in pro residues. 2 stretches are compositionally biased toward low complexity: residues 480-490 (SRPFSPPIHSS) and 497-520 (PLARAESTSSISSTNSLSAATTPT). A phosphoserine mark is found at Ser484, Ser505, and Gly533. In terms of domain architecture, MHD spans 537-805 (TLPVAAAFTE…RFAAGKYLAD (269 aa)). 4 interaction with DPF motifs-containing proteins regions span residues 539–545 (PVAAAFT), 571–573 (SFP), 645–648 (TYYN), and 791–796 (SLIKKR). The segment at 627 to 806 (MPNLMTHLKK…FAAGKYLADN (180 aa)) is necessary and sufficient to mediate interaction with CANX.

In terms of assembly, interacts with proteins essential or regulating the formation of functional clathrin-coated pits. Interacts with CANX. Interacts with AP2A1. Interacts with EPS15. Interacts with SH3GL3. Interacts with AMPH. Interacts with ITSN1 (via SH3 domains). Interacts with and REPS1. Detected in brain, spinal cord and cerebellum.

It is found in the membrane. It localises to the clathrin-coated pit. May function in clathrin-mediated endocytosis. Has both a membrane binding/tubulating activity and the ability to recruit proteins essential to the formation of functional clathrin-coated pits. Has a preference for membranes enriched in phosphatidylserine and phosphoinositides and is required for the endocytosis of the transferrin receptor. May also bind tubulin. May play a role in the regulation of energy homeostasis. This chain is SH3-containing GRB2-like protein 3-interacting protein 1 (Sgip1), found in Mus musculus (Mouse).